Consider the following 878-residue polypeptide: Phosphoenolpyruvate carboxylase (878 aa).

Active-site residues include H140 and K545.

The protein belongs to the PEPCase type 1 family. It depends on Mg(2+) as a cofactor.

It carries out the reaction oxaloacetate + phosphate = phosphoenolpyruvate + hydrogencarbonate. In terms of biological role, forms oxaloacetate, a four-carbon dicarboxylic acid source for the tricarboxylic acid cycle. This is Phosphoenolpyruvate carboxylase from Pseudomonas syringae pv. tomato (strain ATCC BAA-871 / DC3000).